We begin with the raw amino-acid sequence, 358 residues long: Chorismate synthase (358 aa).

Position 48 (Arg-48) interacts with NADP(+). Residues 125–127, Ser-277, 292–296, and Arg-318 each bind FMN; these read RAS and KPIPS.

It belongs to the chorismate synthase family. In terms of assembly, homotetramer. The cofactor is FMNH2.

It catalyses the reaction 5-O-(1-carboxyvinyl)-3-phosphoshikimate = chorismate + phosphate. Its pathway is metabolic intermediate biosynthesis; chorismate biosynthesis; chorismate from D-erythrose 4-phosphate and phosphoenolpyruvate: step 7/7. Functionally, catalyzes the anti-1,4-elimination of the C-3 phosphate and the C-6 proR hydrogen from 5-enolpyruvylshikimate-3-phosphate (EPSP) to yield chorismate, which is the branch point compound that serves as the starting substrate for the three terminal pathways of aromatic amino acid biosynthesis. This reaction introduces a second double bond into the aromatic ring system. This is Chorismate synthase from Desulfatibacillum aliphaticivorans.